The following is a 565-amino-acid chain: Anaphase-promoting complex subunit 7 (565 aa).

10 TPR repeats span residues 101–134 (EIEV…RQRT), 169–202 (LDAI…LDWL), 203–236 (SVWI…LRDN), 237–270 (VDLL…DPYL), 339–372 (VQAL…APCR), 373–406 (LDCY…LGAN), 407–441 (AQTL…RPDY), 442–474 (IKAV…NQSD), 475–508 (CVLH…DPND), and 509–531 (QKSL…TQEE). Lysine 229 bears the N6-acetyllysine mark. A compositionally biased stretch (basic and acidic residues) spans 513-523 (EGMQKMEKEES). Residues 513 to 565 (EGMQKMEKEESPTDATQEEDVDDMEGSGEEGDLEGSDSEAAQWADQEQWFGMQ) are disordered. Over residues 528–549 (TQEEDVDDMEGSGEEGDLEGSD) the composition is skewed to acidic residues.

The protein belongs to the APC7 family. V-shaped homodimer. The mammalian APC/C is composed at least of 14 distinct subunits ANAPC1, ANAPC2, CDC27/APC3, ANAPC4, ANAPC5, CDC16/APC6, ANAPC7, CDC23/APC8, ANAPC10, ANAPC11, CDC26/APC12, ANAPC13, ANAPC15 and ANAPC16 that assemble into a complex of at least 19 chains with a combined molecular mass of around 1.2 MDa; APC/C interacts with FZR1 and FBXO5.

The protein resides in the cytoplasm. It is found in the cytoskeleton. It localises to the nucleus. Its subcellular location is the spindle. It functions in the pathway protein modification; protein ubiquitination. Its function is as follows. Component of the anaphase promoting complex/cyclosome (APC/C), a cell cycle-regulated E3 ubiquitin ligase that controls progression through mitosis and the G1 phase of the cell cycle. The APC/C complex acts by mediating ubiquitination and subsequent degradation of target proteins: it mainly mediates the formation of 'Lys-11'-linked polyubiquitin chains and, to a lower extent, the formation of 'Lys-48'- and 'Lys-63'-linked polyubiquitin chains. The APC/C complex catalyzes assembly of branched 'Lys-11'-/'Lys-48'-linked branched ubiquitin chains on target proteins. APC7 is not required for the assembly of the APC/C complex, but has an enzyme-substrate adapter activity mediating the processive ubiquitination of specific substrates. Involved in brain development through the specific ubiquitination and clearance of MKI67 from constitutive heterochromatin after neuronal progenitors exit mitosis. The polypeptide is Anaphase-promoting complex subunit 7 (Homo sapiens (Human)).